Here is a 488-residue protein sequence, read N- to C-terminus: Protein Notchless (488 aa).

A disordered region spans residues 1-22 (MLAKKQKMQETDTEQEATPHTI). The interval 19–101 (PHTIQARLVS…VIDIVYQPQA (83 aa)) is ubiquitin-like (UBL) domain. WD repeat units lie at residues 117-156 (GHAE…PHFT), 159-198 (GHKQ…QKGR), 202-246 (GHKK…CLMN), 249-287 (GHTN…LCRT), 329-370 (LQES…CVER), 373-412 (GHQN…YMAT), 415-454 (GHVQ…LAQE), and 457-488 (GHAD…LWAY).

This sequence belongs to the NLE1/RSA4 family. As to quaternary structure, interacts with Notch (via cytoplasmic domain). Associates with the pre-60S ribosomal particle.

Its subcellular location is the nucleus. The protein localises to the nucleolus. In terms of biological role, plays a role in regulating Notch activity. The sequence is that of Protein Notchless from Drosophila melanogaster (Fruit fly).